Reading from the N-terminus, the 99-residue chain is MSRAILQVMIRGRVQGVGYRAWVEYQATASGLEGWVRNRRDGSVEALFAGAPNHVADMVALCRHGPPSSRVDSVTSETAGADELNLRRAGEKFSVLPTV.

The Acylphosphatase-like domain maps to 5–97 (ILQVMIRGRV…RAGEKFSVLP (93 aa)). Catalysis depends on residues Arg20 and Asn38.

The protein belongs to the acylphosphatase family.

The catalysed reaction is an acyl phosphate + H2O = a carboxylate + phosphate + H(+). This is Acylphosphatase (acyP) from Bradyrhizobium diazoefficiens (strain JCM 10833 / BCRC 13528 / IAM 13628 / NBRC 14792 / USDA 110).